Reading from the N-terminus, the 300-residue chain is tRNA pseudouridine synthase B (300 aa).

The Nucleophile role is filled by aspartate 41.

Belongs to the pseudouridine synthase TruB family. Type 1 subfamily.

The catalysed reaction is uridine(55) in tRNA = pseudouridine(55) in tRNA. Its function is as follows. Responsible for synthesis of pseudouridine from uracil-55 in the psi GC loop of transfer RNAs. This is tRNA pseudouridine synthase B from Synechococcus sp. (strain WH7803).